Here is a 103-residue protein sequence, read N- to C-terminus: Large ribosomal subunit protein uL24 (103 aa).

It belongs to the universal ribosomal protein uL24 family. In terms of assembly, part of the 50S ribosomal subunit.

One of two assembly initiator proteins, it binds directly to the 5'-end of the 23S rRNA, where it nucleates assembly of the 50S subunit. Its function is as follows. One of the proteins that surrounds the polypeptide exit tunnel on the outside of the subunit. This Sinorhizobium medicae (strain WSM419) (Ensifer medicae) protein is Large ribosomal subunit protein uL24.